The chain runs to 555 residues: Steroid-22-oyl-CoA synthetase (555 aa).

The protein belongs to the ATP-dependent AMP-binding enzyme family.

The enzyme catalyses 3-oxochol-4-en-22-oate + ATP + CoA = 3-oxochol-4-en-22-oyl-CoA + AMP + diphosphate. It carries out the reaction 3-hydroxy-9-oxo-9,10-seco-chola-1,3,5-trien-22-oate + ATP + CoA = 3-hydroxy-9-oxo-9,10-seco-chola-1,3,5-trien-22-oyl-CoA + AMP + diphosphate. It participates in steroid metabolism. In terms of biological role, involved in cholate catabolism. Catalyzes the ATP-dependent formation of CoA thioesters of steroids with isopropanoyl side chains, likely occurring as degradation intermediates. Can use 4-BNC, HSBNC and HIDP as substrate. This chain is Steroid-22-oyl-CoA synthetase, found in Rhodococcus jostii (strain RHA1).